Consider the following 490-residue polypeptide: Bifunctional protein HldE (490 aa).

The interval methionine 1–alanine 330 is ribokinase. Residue asparagine 205 to glutamate 208 coordinates ATP. Aspartate 275 is an active-site residue. The segment at phenylalanine 358–serine 490 is cytidylyltransferase.

It in the N-terminal section; belongs to the carbohydrate kinase PfkB family. The protein in the C-terminal section; belongs to the cytidylyltransferase family. As to quaternary structure, homodimer.

It catalyses the reaction D-glycero-beta-D-manno-heptose 7-phosphate + ATP = D-glycero-beta-D-manno-heptose 1,7-bisphosphate + ADP + H(+). The enzyme catalyses D-glycero-beta-D-manno-heptose 1-phosphate + ATP + H(+) = ADP-D-glycero-beta-D-manno-heptose + diphosphate. The protein operates within nucleotide-sugar biosynthesis; ADP-L-glycero-beta-D-manno-heptose biosynthesis; ADP-L-glycero-beta-D-manno-heptose from D-glycero-beta-D-manno-heptose 7-phosphate: step 1/4. Its pathway is nucleotide-sugar biosynthesis; ADP-L-glycero-beta-D-manno-heptose biosynthesis; ADP-L-glycero-beta-D-manno-heptose from D-glycero-beta-D-manno-heptose 7-phosphate: step 3/4. Catalyzes the phosphorylation of D-glycero-D-manno-heptose 7-phosphate at the C-1 position to selectively form D-glycero-beta-D-manno-heptose-1,7-bisphosphate. Its function is as follows. Catalyzes the ADP transfer from ATP to D-glycero-beta-D-manno-heptose 1-phosphate, yielding ADP-D-glycero-beta-D-manno-heptose. The sequence is that of Bifunctional protein HldE from Rhodopseudomonas palustris (strain ATCC BAA-98 / CGA009).